A 247-amino-acid polypeptide reads, in one-letter code: Probable transcriptional regulatory protein LPC_0711 (247 aa).

This sequence belongs to the TACO1 family.

The protein localises to the cytoplasm. The sequence is that of Probable transcriptional regulatory protein LPC_0711 from Legionella pneumophila (strain Corby).